The following is a 434-amino-acid chain: Protein maelstrom homolog (434 aa).

A DNA-binding region (HMG box) is located at residues 4–73; that stretch reads RRASRNAYYF…AQGKDSGPSE (70 aa).

This sequence belongs to the maelstrom family. As to quaternary structure, interacts with SMARCB1, SIN3B and DDX4. Interacts with piRNA-associated proteins TDRD1, PIWIL1 and PIWIL2. Interacts with Tex19.1 and, probably, Tex19.2. As to expression, testis-specific. Present in spermatocytes and round and early elongating spermatids.

Its subcellular location is the cytoplasm. The protein resides in the nucleus. Its function is as follows. Plays a central role during spermatogenesis by repressing transposable elements and preventing their mobilization, which is essential for the germline integrity. Acts via the piRNA metabolic process, which mediates the repression of transposable elements during meiosis by forming complexes composed of piRNAs and Piwi proteins and governs the methylation and subsequent repression of transposons. Its association with piP-bodies suggests a participation in the secondary piRNAs metabolic process. Required for the localization of germ-cell factors to the meiotic nuage. The chain is Protein maelstrom homolog from Mus musculus (Mouse).